The primary structure comprises 519 residues: Glucoamylase GLU1 (519 aa).

An N-terminal signal peptide occupies residues 1–27 (MKFGVLFSVFAAIVSALPLQEGPLNKR). Residues Asn115 and Asn127 are each glycosylated (N-linked (GlcNAc...) asparagine). Trp166 contributes to the substrate binding site. N-linked (GlcNAc...) asparagine glycosylation occurs at Asn205. The active-site Proton acceptor is the Asp234. Glu237 functions as the Proton donor in the catalytic mechanism.

The protein belongs to the glycosyl hydrolase 15 family.

It catalyses the reaction Hydrolysis of terminal (1-&gt;4)-linked alpha-D-glucose residues successively from non-reducing ends of the chains with release of beta-D-glucose.. In Saccharomycopsis fibuligera (Yeast), this protein is Glucoamylase GLU1 (GLU1).